We begin with the raw amino-acid sequence, 208 residues long: FMN-dependent NADH:quinone oxidoreductase 3 (208 aa).

This sequence belongs to the azoreductase type 1 family. Homodimer. FMN is required as a cofactor.

It carries out the reaction 2 a quinone + NADH + H(+) = 2 a 1,4-benzosemiquinone + NAD(+). The catalysed reaction is N,N-dimethyl-1,4-phenylenediamine + anthranilate + 2 NAD(+) = 2-(4-dimethylaminophenyl)diazenylbenzoate + 2 NADH + 2 H(+). Its function is as follows. Quinone reductase that provides resistance to thiol-specific stress caused by electrophilic quinones. Also exhibits azoreductase activity. Catalyzes the reductive cleavage of the azo bond in aromatic azo compounds to the corresponding amines. The chain is FMN-dependent NADH:quinone oxidoreductase 3 from Bacillus cereus (strain ATCC 14579 / DSM 31 / CCUG 7414 / JCM 2152 / NBRC 15305 / NCIMB 9373 / NCTC 2599 / NRRL B-3711).